The chain runs to 356 residues: NADH-quinone oxidoreductase subunit H (356 aa).

Transmembrane regions (helical) follow at residues 18 to 38 (IVMV…IAYI), 87 to 107 (GVFL…WAVI), 120 to 140 (VGIL…IMGG), 166 to 186 (IGFV…SAIV), 202 to 222 (WLTF…VFYV), 257 to 277 (LFML…AILF), 292 to 312 (WVPG…LIAM), and 333 to 353 (FLPL…FAGI).

It belongs to the complex I subunit 1 family. NDH-1 is composed of 14 different subunits. Subunits NuoA, H, J, K, L, M, N constitute the membrane sector of the complex.

Its subcellular location is the cell inner membrane. The catalysed reaction is a quinone + NADH + 5 H(+)(in) = a quinol + NAD(+) + 4 H(+)(out). NDH-1 shuttles electrons from NADH, via FMN and iron-sulfur (Fe-S) centers, to quinones in the respiratory chain. The immediate electron acceptor for the enzyme in this species is believed to be ubiquinone. Couples the redox reaction to proton translocation (for every two electrons transferred, four hydrogen ions are translocated across the cytoplasmic membrane), and thus conserves the redox energy in a proton gradient. This subunit may bind ubiquinone. The polypeptide is NADH-quinone oxidoreductase subunit H (Nitrobacter winogradskyi (strain ATCC 25391 / DSM 10237 / CIP 104748 / NCIMB 11846 / Nb-255)).